An 853-amino-acid polypeptide reads, in one-letter code: Bromodomain-containing protein bet-1 (853 aa).

Residues 1–19 (MSEGSGDQSQQRPWASPRQ) show a composition bias toward polar residues. Disordered regions lie at residues 1-22 (MSEGSGDQSQQRPWASPRQQPI) and 141-245 (SLEQ…LRAK). The Bromo 1 domain occupies 39–145 (RHTNKLDYIM…EVIKKSLEQA (107 aa)). Basic and acidic residues predominate over residues 141–153 (SLEQAPREEHDMD). Composition is skewed to low complexity over residues 166–175 (SDGGSKSSSS) and 192–215 (SEVSSVTTASAAAPTVSESASVAA). Residue Lys-252 forms a Glycyl lysine isopeptide (Lys-Gly) (interchain with G-Cter in SUMO) linkage. The Bromo 2 domain maps to 257-366 (QPLLPSMKPC…EVFDRRWAEL (110 aa)). A compositionally biased stretch (low complexity) spans 369 to 381 (SSSRASSVAPQSA). The interval 369–418 (SSSRASSVAPQSAPIAPTPKVAKSSAPKEPKESRKEHKKETTFEASGAKS) is disordered. Residues 394 to 410 (APKEPKESRKEHKKETT) are compositionally biased toward basic and acidic residues. The stretch at 419–458 (EDLMQINNALSMIREREEKLKAELAAAQAIKDKLTSVKNR) forms a coiled coil. An NET domain is found at 516-601 (DSDDEDNKMA…TIPTLNGNGD (86 aa)). Disordered regions lie at residues 594–814 (PTLN…DEQT) and 819–838 (MRMEAKRARQKEDEGSVSLS). The span at 612–624 (TSSGATGSKGSSS) shows a compositional bias: low complexity. Polar residues predominate over residues 684 to 696 (QPPSTSREWNQSS). A compositionally biased stretch (low complexity) spans 708–736 (QPPMSRVPASSSTSVSAIGKNNAAASSNS). A compositionally biased stretch (polar residues) spans 786 to 807 (QFFQSQPTTSATIRSPTESQPG). The span at 819 to 832 (MRMEAKRARQKEDE) shows a compositional bias: basic and acidic residues.

The protein belongs to the BET family. Interacts with acetylated histone H4. Interacts (via BROMO domain 2) with smo-1 and ubc-9. Expressed in T-cells, Q-cells, V5-cells and their descendants such as somatic gonad and syncytium.

It localises to the nucleus. Its subcellular location is the chromosome. In terms of biological role, required for the establishment and maintenance of stable cell fate in several lineages including V5.pa, T, Z1/Z4 and QR lineages probably by repressing the expression of cell fate determinants. Required to maintain non-distal tip cell (DTC) fate of somatic gonadal cells through the htz-1-mediated repression of transcription factor ceh-22. Regulates the subnuclear localization of histone variant htz-1 in somatic gonadal cells. Plays a role in the attenuation of the let-60/ras pathway, probably by preventing expression of activators of the pathway. Involved in adult locomotion. Acts together with the sumoylation pathway to prevent muscle myosin depletion in aging adults probably by preventing myoblast growth factor receptor egl-15 overexpression. May play a role in vulva development. The sequence is that of Bromodomain-containing protein bet-1 from Caenorhabditis elegans.